Reading from the N-terminus, the 409-residue chain is Elongation factor Tu, chloroplastic (409 aa).

The 205-residue stretch at 10-214 (KPHINIGTIG…QVDSYIPTPT (205 aa)) folds into the tr-type G domain. Residues 19 to 26 (GHVDHGKT) are G1. A GTP-binding site is contributed by 19 to 26 (GHVDHGKT). Threonine 26 is a binding site for Mg(2+). At lysine 57 the chain carries N6-methyllysine. Residues 60-64 (GITIN) are G2. A G3 region spans residues 81-84 (DCPG). Residues 81 to 85 (DCPGH) and 136 to 139 (NKED) each bind GTP. A G4 region spans residues 136–139 (NKED). Positions 174–176 (SAL) are G5.

Belongs to the TRAFAC class translation factor GTPase superfamily. Classic translation factor GTPase family. EF-Tu/EF-1A subfamily.

Its subcellular location is the plastid. The protein localises to the chloroplast. The catalysed reaction is GTP + H2O = GDP + phosphate + H(+). In terms of biological role, GTP hydrolase that promotes the GTP-dependent binding of aminoacyl-tRNA to the A-site of ribosomes during protein biosynthesis. The polypeptide is Elongation factor Tu, chloroplastic (tufA) (Euglena gracilis).